Here is a 195-residue protein sequence, read N- to C-terminus: FMN-dependent NADH:quinone oxidoreductase (195 aa).

Residues Ser-10, 16-18, 91-94, and 135-138 contribute to the FMN site; these read SQS, MYNF, and TRGG.

It belongs to the azoreductase type 1 family. As to quaternary structure, homodimer. The cofactor is FMN.

The enzyme catalyses 2 a quinone + NADH + H(+) = 2 a 1,4-benzosemiquinone + NAD(+). The catalysed reaction is N,N-dimethyl-1,4-phenylenediamine + anthranilate + 2 NAD(+) = 2-(4-dimethylaminophenyl)diazenylbenzoate + 2 NADH + 2 H(+). Functionally, quinone reductase that provides resistance to thiol-specific stress caused by electrophilic quinones. Its function is as follows. Also exhibits azoreductase activity. Catalyzes the reductive cleavage of the azo bond in aromatic azo compounds to the corresponding amines. The sequence is that of FMN-dependent NADH:quinone oxidoreductase from Vibrio vulnificus (strain YJ016).